Consider the following 235-residue polypeptide: Exotoxin type C (235 aa).

Residues 1 to 27 (MKKINIIKIVFIITVILISTISPIIKS) form the signal peptide. Residues His-194, His-228, and Asp-230 each contribute to the Zn(2+) site.

The protein belongs to the staphylococcal/streptococcal toxin family.

Superantigen that acts as a causative agent of the symptoms associated with scarlet fever. Has been associated with streptococcal toxic shock-like disease and may play a role in the early events of rheumatic fever. Superantigens cross-link major histocompatibility complex (MHC) class II and T-cell receptor (TCR) molecules, resulting in an overstimulation of T-cells associated with a massive release of pyrogenic and inflammatory cytokines. The protein is Exotoxin type C (speC) of Streptococcus pyogenes serotype M1.